The primary structure comprises 284 residues: 2,3,4,5-tetrahydropyridine-2,6-dicarboxylate N-succinyltransferase (284 aa).

The substrate site is built by Arg111 and Asp148.

It belongs to the transferase hexapeptide repeat family. In terms of assembly, homotrimer.

It localises to the cytoplasm. The catalysed reaction is (S)-2,3,4,5-tetrahydrodipicolinate + succinyl-CoA + H2O = (S)-2-succinylamino-6-oxoheptanedioate + CoA. The protein operates within amino-acid biosynthesis; L-lysine biosynthesis via DAP pathway; LL-2,6-diaminopimelate from (S)-tetrahydrodipicolinate (succinylase route): step 1/3. This chain is 2,3,4,5-tetrahydropyridine-2,6-dicarboxylate N-succinyltransferase, found in Agrobacterium fabrum (strain C58 / ATCC 33970) (Agrobacterium tumefaciens (strain C58)).